The following is a 233-amino-acid chain: Large ribosomal subunit protein uL1 (233 aa).

Belongs to the universal ribosomal protein uL1 family. In terms of assembly, part of the 50S ribosomal subunit.

Functionally, binds directly to 23S rRNA. The L1 stalk is quite mobile in the ribosome, and is involved in E site tRNA release. In terms of biological role, protein L1 is also a translational repressor protein, it controls the translation of the L11 operon by binding to its mRNA. In Shewanella denitrificans (strain OS217 / ATCC BAA-1090 / DSM 15013), this protein is Large ribosomal subunit protein uL1.